Reading from the N-terminus, the 70-residue chain is MEAGAYLNAIIFVLVATIIAVISRGLTRTEPCTIRITGESITVHACHIDSETIKALANLKPLSLERLSFQ.

Residues 1–4 (MEAG) lie on the Lumenal side of the membrane. A helical membrane pass occupies residues 5–27 (AYLNAIIFVLVATIIAVISRGLT). The Cytoplasmic portion of the chain corresponds to 28-70 (RTEPCTIRITGESITVHACHIDSETIKALANLKPLSLERLSFQ).

It belongs to the Tymovirales TGBp3 protein family.

It localises to the host endoplasmic reticulum membrane. Functionally, plays a role in viral cell-to-cell propagation, by facilitating genome transport to neighboring plant cells through plasmosdesmata. May induce the formation of granular vesicles derived from the Endoplasmic reticulum, which align on actin filaments. The protein is Movement protein TGBp3 of Potato virus X (strain CP) (PVX).